The following is a 213-amino-acid chain: Protein ORF D (213 aa).

The polypeptide is Protein ORF D (Elephas maximus (Indian elephant)).